The primary structure comprises 118 residues: Protein BEX4 (118 aa).

Residues 14-50 form a disordered region; it reads VEKDKKDKKGGKASKQSEEEPHHLEEVENKKPGGNVR. Basic and acidic residues predominate over residues 28-44; it reads KQSEEEPHHLEEVENKK. The tract at residues 30 to 88 is interaction with SIRT2; it reads SEEEPHHLEEVENKKPGGNVRRKVRRLVPNFLWAIPNRHVDRNEGGEDVGRFVVQGTEV. The tract at residues 30–118 is interaction with alpha-tubulin; the sequence is SEEEPHHLEE…DNHYDFCLIP (89 aa). Cys-115 contributes to the Zn(2+) binding site.

It belongs to the BEX family. As to quaternary structure, interacts with alpha-tubulin. Interacts with SIRT2. Ubiquitinated and degraded by the proteasome. Expressed in both Sertoli and germ cells as well as interstitial area of the testis (at protein level).

It localises to the cytoplasm. It is found in the cytoskeleton. The protein resides in the spindle pole. Its subcellular location is the nucleus. Its function is as follows. May play a role in microtubule deacetylation by negatively regulating the SIRT2 deacetylase activity toward alpha-tubulin and thereby participate in the control of cell cycle progression and genomic stability. In absence of reductive stress, acts as a pseudosubstrate for the CRL2(FEM1B) complex: associates with FEM1B via zinc, thereby preventing association between FEM1B and its substrates. The chain is Protein BEX4 from Mus musculus (Mouse).